The sequence spans 553 residues: Putative transport protein YidE (553 aa).

Transmembrane regions (helical) follow at residues 4-24 (IALTVSVLALVAVVGLWIGNI), 28-48 (GVGFGIGGVLFGGIIVGHFVD), 65-85 (FGLILFVYTIGIQVGPGFFAS), 95-115 (LFAVLIVIMGGLVTAILHKIF), and 158-178 (MSYAMAYPFGICGILLTMWLM). RCK C-terminal domains are found at residues 192–276 (KHES…VIGK) and 279–361 (DTSL…VVGN). 5 consecutive transmembrane segments (helical) span residues 371–391 (MLPVFIGIGLGVLLGSIPLFV), 403–425 (AGGPLIIALILGRIGSIGKLYWF), 437–457 (LGIVLFLAVVGLKSGGNFVNT), 464–484 (LSWIGYGIFITAIPLITVGLL), and 533–553 (LVMFLRIITPQLLAVIFWGIG).

Belongs to the AAE transporter (TC 2.A.81) family. YidE subfamily.

It localises to the cell membrane. The chain is Putative transport protein YidE from Salmonella arizonae (strain ATCC BAA-731 / CDC346-86 / RSK2980).